We begin with the raw amino-acid sequence, 689 residues long: Shutoff protein (689 aa).

The tract at residues 1–24 (MSEEPVSGTTVEIEEDTHTPPNSP) is disordered. The tract at residues 226–289 (VMNNLLVKRA…SVLVTVVLEC (64 aa)) is binding to host EIF4G. The RRM domain occupies 292–410 (RLFTSKDMVK…PLYTETSQRL (119 aa)). Phosphotyrosine; by host is present on residues Tyr-309 and Tyr-627. Residues 625–689 (GQYLDPHTGE…GEPDVRGTTS (65 aa)) form a disordered region. The segment covering 645–655 (SGHEFQGDGRH) has biased composition (basic and acidic residues). Residues 656–675 (REPKRGRHFRQRGGPRKPPR) show a composition bias toward basic residues. Positions 678–689 (AGGEPDVRGTTS) are enriched in basic and acidic residues.

Belongs to the adenoviridae shutoff protein family. As to quaternary structure, monomer. Interacts with hexon protein; this interaction allows chaperoning and trimerization of hexon proteins. Interacts (via N-terminus) with host initiation factor EIF4G (via C-terminus). Interacts (via RRM domain) with viral mRNAs that contain the tripartite leader; this interaction allows ribosome shunting and expression of viral late mRNAs. Might be cleaved by the viral protease. Post-translationally, phosphorylated. Tyrosine phosphorylation enhances preferential binding to tripartite leader mRNAs and allows ribosome shunting. In terms of processing, methylated. Asymmetric dimethylation by host PRMT1 of the Arg/Gly-rich region may regulate shutoff protein binding to hexon and promote the capsid assembly in the nucleus.

Its subcellular location is the host cytoplasm. Functionally, protein that inhibits host translation while promoting late viral translation by ribosome shunting. Blocks host cap-dependent translation by binding to eIF4G, displacing MKNK1 from cap initiation complexes and preventing EIF4E phosphorylation. Binds to the tripartite leader sequence of viral late mRNAs and recruits host eIF4G, PABPC1/poly-A binding protein and 40S ribosomes subunits on viral mRNAs, allowing ribosome shunting and efficient translation of late viral mRNAs even though conventional translation via ribosome scanning from the cap has been shut off in the host cell. During assembly, acts as a chaperone protein that helps hexon proteins assembly into trimers. The polypeptide is Shutoff protein (Canis lupus familiaris (Dog)).